Reading from the N-terminus, the 210-residue chain is Tetraspanin-31 (210 aa).

Residues 1 to 12 (MVCGGFACSRNA) lie on the Cytoplasmic side of the membrane. A helical transmembrane segment spans residues 13-33 (LCALNVVYMLVGFLLIGVAAW). Residues 34–44 (GKGLGVVSSIH) are Extracellular-facing. Residues 45–65 (IIGGVIAVGVFLLLIAVAGLV) form a helical membrane-spanning segment. Residues 66-72 (GAANHHQ) are Cytoplasmic-facing. Residues 73-93 (VLLFFYMIILGLVFIFQFGIS) traverse the membrane as a helical segment. Residues 94 to 173 (CSCLAINRNT…FLKHSDKALK (80 aa)) lie on the Extracellular side of the membrane. N-linked (GlcNAc...) asparagine glycosylation is found at Asn-109, Asn-117, and Asn-134. A helical membrane pass occupies residues 174–194 (ILGGVGLFFSFTEILGVWLAM). Residues 195-210 (RFRNQKDPRANPSAFL) are Cytoplasmic-facing.

Belongs to the tetraspanin (TM4SF) family.

It is found in the membrane. The protein is Tetraspanin-31 (Tspan31) of Mus musculus (Mouse).